The chain runs to 392 residues: 5-azacytidine-induced protein 2 (392 aa).

Residues 1 to 197 (MDALVEDDIC…IELQKAKQTD (197 aa)) form a homodimerization region. 3 coiled-coil regions span residues 40–76 (ALVTAYEDIKKRLKDSEKENSLLKKRIRFLEEKLIAR), 102–135 (DRDNLKSKLDKMNKDNSESLKVLNEQLQSKEVEL), and 166–196 (DLKIHGLEQELELMRKECSDLKIELQKAKQT). The segment at 216 to 257 (SDNMQHAYWELKREMSNLHLVTQVQAELLRKLKTSTAIKKAC) is interaction with TBK1 and IKBKE. Phosphoserine occurs at positions 318 and 353. Positions 345–365 (EDNSWVFPSPPKSSETAFGET) are disordered.

Homodimer. Interacts with IKBKE, TBK1 and TICAM1. Interacts with TAX1BP1. Interacts with CALCOCO2. Ubiquitinated via 'Lys-48'-linked polyubiquitination by TRIM38, leading to its degradation.

Its subcellular location is the cytoplasm. Its function is as follows. Adapter protein which binds TBK1 and IKBKE playing a role in antiviral innate immunity. Activates serine/threonine-protein kinase TBK1 and facilitates its oligomerization. Enhances the phosphorylation of NF-kappa-B p65 subunit RELA by TBK1. Promotes TBK1-induced as well as TNF-alpha or PMA-induced activation of NF-kappa-B. Participates in IFNB promoter activation via TICAM1. The chain is 5-azacytidine-induced protein 2 (AZI2) from Pongo abelii (Sumatran orangutan).